The primary structure comprises 328 residues: Putative tyrosine-protein kinase C03B1.5 (328 aa).

Positions tryptophan 25–leucine 288 constitute a Protein kinase domain. ATP contacts are provided by residues isoleucine 31–valine 39 and lysine 62. Aspartate 155 (proton acceptor) is an active-site residue.

The protein belongs to the protein kinase superfamily. Tyr protein kinase family.

The enzyme catalyses L-tyrosyl-[protein] + ATP = O-phospho-L-tyrosyl-[protein] + ADP + H(+). This is Putative tyrosine-protein kinase C03B1.5 from Caenorhabditis elegans.